Consider the following 182-residue polypeptide: Small ribosomal subunit protein uS4c (182 aa).

The S4 RNA-binding domain occupies 82 to 143 (MRLDNILFRL…KQRSKALIQN (62 aa)).

It belongs to the universal ribosomal protein uS4 family. In terms of assembly, part of the 30S ribosomal subunit. Contacts protein S5. The interaction surface between S4 and S5 is involved in control of translational fidelity.

It is found in the plastid. Its subcellular location is the chloroplast. One of the primary rRNA binding proteins, it binds directly to 16S rRNA where it nucleates assembly of the body of the 30S subunit. In terms of biological role, with S5 and S12 plays an important role in translational accuracy. The polypeptide is Small ribosomal subunit protein uS4c (rps4) (Iris domestica (Leopard lily)).